A 303-amino-acid polypeptide reads, in one-letter code: Probable phytol kinase, chloroplastic (303 aa).

The transit peptide at 1–49 directs the protein to the chloroplast; that stretch reads MAAAAAWTGAASPNSLLLSRSPPHAAALAPSPGSSMRRRLLLGVGTPAV. The next 6 helical transmembrane spans lie at 98–118, 122–144, 168–188, 227–247, 254–274, and 276–296; these read VVHV…SNST, YFAA…RLYT, YVLV…IGIV, FISG…LGYI, ALGK…VPVT, and VVDD…LLFS.

Belongs to the polyprenol kinase family.

The protein localises to the plastid. Its subcellular location is the chloroplast membrane. It carries out the reaction phytol + CTP = phytyl phosphate + CDP + H(+). It functions in the pathway cofactor biosynthesis; tocopherol biosynthesis. Involved in the activation and reutilization of phytol from chlorophyll degradation in plant metabolism, including tocopherol biosynthesis. Catalyzes the conversion of phytol to phytol monophosphate (PMP). This is Probable phytol kinase, chloroplastic from Zea mays (Maize).